Reading from the N-terminus, the 944-residue chain is Nonsense-mediated mRNA decay factor SMG8 (944 aa).

Disordered regions lie at residues 560 to 597 (NTGK…QNTA) and 628 to 653 (QASS…DTEN). A compositionally biased stretch (acidic residues) spans 568–583 (QDEDAGEDEAEEEEGQ). Residues 628–650 (QASSEQLSNSEQNTTSSGTSSAD) are compositionally biased toward polar residues.

Belongs to the SMG8 family.

Its function is as follows. Involved in nonsense-mediated decay (NMD) of mRNAs containing premature stop codons. Probable component of kinase complex containing nonC and recruited to stalled ribosomes. This is Nonsense-mediated mRNA decay factor SMG8 from Drosophila simulans (Fruit fly).